The chain runs to 242 residues: Small ribosomal subunit protein uS2 (242 aa).

Belongs to the universal ribosomal protein uS2 family.

The sequence is that of Small ribosomal subunit protein uS2 from Neisseria meningitidis serogroup B (strain ATCC BAA-335 / MC58).